Here is a 306-residue protein sequence, read N- to C-terminus: tRNA dimethylallyltransferase (306 aa).

15-22 (GPTASGKS) provides a ligand contact to ATP. Residue 17–22 (TASGKS) participates in substrate binding. An interaction with substrate tRNA region spans residues 40 to 43 (DSMQ).

This sequence belongs to the IPP transferase family. Monomer. It depends on Mg(2+) as a cofactor.

It catalyses the reaction adenosine(37) in tRNA + dimethylallyl diphosphate = N(6)-dimethylallyladenosine(37) in tRNA + diphosphate. In terms of biological role, catalyzes the transfer of a dimethylallyl group onto the adenine at position 37 in tRNAs that read codons beginning with uridine, leading to the formation of N6-(dimethylallyl)adenosine (i(6)A). This Methylobacterium sp. (strain 4-46) protein is tRNA dimethylallyltransferase.